Consider the following 207-residue polypeptide: Ribosomal RNA small subunit methyltransferase G (207 aa).

S-adenosyl-L-methionine-binding positions include G74, L79, 125-126 (VE), and R140.

Belongs to the methyltransferase superfamily. RNA methyltransferase RsmG family.

The protein resides in the cytoplasm. It catalyses the reaction guanosine(527) in 16S rRNA + S-adenosyl-L-methionine = N(7)-methylguanosine(527) in 16S rRNA + S-adenosyl-L-homocysteine. Functionally, specifically methylates the N7 position of guanine in position 527 of 16S rRNA. The sequence is that of Ribosomal RNA small subunit methyltransferase G from Shewanella loihica (strain ATCC BAA-1088 / PV-4).